Reading from the N-terminus, the 268-residue chain is UPF0328 protein ECU10_1850 (268 aa).

This sequence belongs to the UPF0328 family.

The sequence is that of UPF0328 protein ECU10_1850 from Encephalitozoon cuniculi (strain GB-M1) (Microsporidian parasite).